We begin with the raw amino-acid sequence, 378 residues long: Putative F-box/kelch-repeat protein At3g43710 (378 aa).

The region spanning 23-69 (TFGIEMLPDDLVLSCLARVPRMYYPILSLVSKRFRSFLTSTELYQTR) is the F-box domain. Kelch repeat units follow at residues 130 to 176 (NIYV…VLDG), 178 to 227 (IYVA…GYDG), and 262 to 308 (SQCV…VPTK).

This is Putative F-box/kelch-repeat protein At3g43710 from Arabidopsis thaliana (Mouse-ear cress).